The sequence spans 475 residues: Ankyrin repeat, SAM and basic leucine zipper domain-containing protein 1 (475 aa).

The disordered stretch occupies residues 1–23 (MAAARFRGLAVAGGGESSESEDD). Phosphoserine occurs at positions 17, 18, and 20. ANK repeat units lie at residues 45–74 (EKNE…SVDS), 78–107 (YGWT…KASF), 110–144 (DKQT…DPNV), 148–177 (RLMT…EVNT), 181–210 (NGYT…NKML), and 214–243 (DGKT…PLEG). In terms of domain architecture, SAM spans 272–334 (SYTAFGDLEI…KILAALKELE (63 aa)).

In terms of assembly, interacts with DDX4, PIWIL1, RANBP9 and TDRD1.

Its subcellular location is the cytoplasm. Plays a central role during spermatogenesis by repressing transposable elements and preventing their mobilization, which is essential for the germline integrity. Acts via the piRNA metabolic process, which mediates the repression of transposable elements during meiosis by forming complexes composed of piRNAs and Piwi proteins and governs the methylation and subsequent repression of transposons. Its association with pi-bodies suggests a participation in the primary piRNAs metabolic process. Required prior to the pachytene stage to facilitate the production of multiple types of piRNAs, including those associated with repeats involved in the regulation of retrotransposons. May act by mediating protein-protein interactions during germ cell maturation. The chain is Ankyrin repeat, SAM and basic leucine zipper domain-containing protein 1 (ASZ1) from Equus caballus (Horse).